Consider the following 1157-residue polypeptide: Hephaestin (1157 aa).

The N-terminal stretch at M1–S18 is a signal peptide. The Extracellular portion of the chain corresponds to I19 to S1109. Plastocyanin-like domains follow at residues A24–C206, Q218–C366, P370–C559, K569–C717, A730–C902, and N910–E1066. 2 N-linked (GlcNAc...) asparagine glycosylation sites follow: N49 and N54. Na(+)-binding residues include G70 and Y73. Cu(2+)-binding residues include H126 and H128. H126 contributes to the O2 binding site. Residues K134, D152, and D153 each coordinate Ca(2+). The N-linked (GlcNAc...) asparagine glycan is linked to N164. C180 and C206 are disulfide-bonded. Cu(2+)-binding residues include H186 and H188. H186 is a binding site for O2. The N-linked (GlcNAc...) asparagine glycan is linked to N236. S265 contributes to the Na(+) binding site. A disulfide bond links C285 and C366. Residues H304, C347, and H352 each coordinate Cu(2+). Residues Y416, G425, and Y428 each contribute to the Na(+) site. A disulfide bond links C533 and C559. An N-linked (GlcNAc...) asparagine glycan is attached at N587. S616 lines the Na(+) pocket. C636 and C717 are joined by a disulfide. The Cu(2+) site is built by H655, C698, H703, and M708. 2 N-linked (GlcNAc...) asparagine glycosylation sites follow: N713 and N757. F768 and G777 together coordinate Na(+). C876 and C902 are joined by a disulfide. N930 carries an N-linked (GlcNAc...) asparagine glycan. Cu(2+) contacts are provided by H999, H1002, H1004, H1044, C1045, H1046, H1050, and M1055. The O2 site is built by H1002 and H1004. O2 is bound at residue H1046. The helical transmembrane segment at A1110–W1130 threads the bilayer. The Cytoplasmic segment spans residues Y1131–Q1157. S1144, S1149, and S1154 each carry phosphoserine.

It belongs to the multicopper oxidase family. Part of a complex composed of SLC40A1/ferroportin, TF/transferrin and HEPH/hephaestin that transfers iron from cells to transferrin. Cu cation is required as a cofactor.

Its subcellular location is the basolateral cell membrane. It carries out the reaction 4 Fe(2+) + O2 + 4 H(+) = 4 Fe(3+) + 2 H2O. Plasma membrane ferroxidase that mediates the extracellular conversion of ferrous/Fe(2+) iron into its ferric/Fe(3+) form. Couples ferroportin which specifically exports ferrous/Fe(2+) iron from cells to transferrin that only binds and shuttles extracellular ferric/Fe(3+) iron throughout the body. By helping iron transfer from cells to blood mainly contributes to dietary iron absorption by the intestinal epithelium and more generally regulates iron levels in the body. The sequence is that of Hephaestin from Mus musculus (Mouse).